A 154-amino-acid polypeptide reads, in one-letter code: GTP-dependent dephospho-CoA kinase (154 aa).

Residues D34, D53, and E107 each contribute to the GTP site.

The protein belongs to the GTP-dependent DPCK family.

It catalyses the reaction 3'-dephospho-CoA + GTP = GDP + CoA + H(+). It participates in cofactor biosynthesis; coenzyme A biosynthesis. Its function is as follows. Catalyzes the GTP-dependent phosphorylation of the 3'-hydroxyl group of dephosphocoenzyme A to form coenzyme A (CoA). The protein is GTP-dependent dephospho-CoA kinase of Nitrosopumilus maritimus (strain SCM1).